A 1050-amino-acid polypeptide reads, in one-letter code: Ankyrin repeat domain-containing protein 27 (1050 aa).

Residues 1 to 372 are sufficient for GEF activity towards RAB21; it reads MALYDEDLLK…RQGSLSAKPP (372 aa). The 139-residue stretch at 233–371 folds into the VPS9 domain; the sequence is ASEDAAFNKI…IRQGSLSAKP (139 aa). ANK repeat units follow at residues 396–426, 462–491, 495–524, 528–560, 564–593, and 597–627; these read SPTDCLFKHIASGNQKEVERLLSQEDHDKDT, RGHTPLHVAAVCGQASLIDLLVSKGAMVNA, HGATPLHLACQKGYQSVTLLLLHYKASAEV, NGNTPLHLACTYGHEDCVKALVYYDVESCRLDI, KGDTPLHIAARWGYQGVIETLLQNGASTEI, and LKETPLKCALNSKILSVMEAYHLSFERRQKS. Residues 396–460 are sufficient for interaction with VPS29; sequence SPTDCLFKHI…PSVVTPFSRD (65 aa). The interval 451-600 is interaction with RAB38; sequence PSVVTPFSRD…TEIQNRLKET (150 aa). The interaction with RAB32 stretch occupies residues 451 to 730; sequence PSVVTPFSRD…APAQKRLAKV (280 aa). The interval 625 to 665 is disordered; sequence QKSSEAPVQSPQRSVDSISQESSTSSFSSMSASSRQEETKK. Positions 628–637 are enriched in polar residues; it reads SEAPVQSPQR. Residues 638-658 are compositionally biased toward low complexity; it reads SVDSISQESSTSSFSSMSASS. The required for interaction with VAMP7 stretch occupies residues 658-707; that stretch reads SRQEETKKDYREVEKLLRAVADGDLEMVRYLLEWTEEDLEDAEDTVSAAD. 5 ANK repeats span residues 668 to 698, 743 to 772, 776 to 805, 809 to 838, and 842 to 871; these read REVEKLLRAVADGDLEMVRYLLEWTEEDLED, DGSSPLHVAALHGRADLIPLLLKHGANAGA, DQAVPLHLACQQGHFQVVKCLLDSNAKPNK, SGNTPLIYACSGGHHELVALLLQHGASINA, and KGNTALHEAVIEKHVFVVELLLLHGASVQV. The interval 692 to 746 is sufficient for interaction with VPS29; the sequence is TEEDLEDAEDTVSAADPEFCHPLCQCPKCAPAQKRLAKVPASGLGVNVTSQDGSS. Residues S962 and S970 each carry the phosphoserine modification. The interval 987 to 1050 is disordered; sequence PAQSGSHAAE…TPQEVSASRS (64 aa). A compositionally biased stretch (basic and acidic residues) spans 994–1004; it reads AAEKGNSDWPE. Position 1023 is a phosphothreonine (T1023). The span at 1040-1050 shows a compositional bias: polar residues; sequence STPQEVSASRS.

As to quaternary structure, interacts with RAB21 (GDP-bound form), VPS29, RAB32 (GTP-bound form), RAB38 (GTP-bound form), VAMP7, KIF5A, KIF5C, GOLGA4. Interacts with low affinity with RAB5. ANKRD27:RAB32 heterodimers can homodimerize to form tetramers. Can interact with RAB38 or RAB32, VPS29 and VAMP7 simultaneously. A decreased interaction with RAB32 seen in the presence of SGSM2.

Its subcellular location is the early endosome. The protein localises to the late endosome. It is found in the cytoplasmic vesicle membrane. The protein resides in the lysosome. It localises to the cell membrane. Its subcellular location is the melanosome. Its function is as follows. May be a guanine exchange factor (GEF) for Rab21, Rab32 and Rab38 and regulate endosome dynamics. May regulate the participation of VAMP7 in membrane fusion events; in vitro inhibits VAMP7-mediated SNARE complex formation by trapping VAMP7 in a closed, fusogenically inactive conformation. Involved in peripheral melanosomal distribution of TYRP1 in melanocytes; the function, which probably is implicating vesicle-trafficking, includes cooperation with Rab32, Rab38 and VAMP7. Involved in the regulation of neurite growth; the function seems to require its GEF activity, probably towards Rab21, and VAMP7 but not Rab32/38. Proposed to be involved in Golgi sorting of VAMP7 and transport of VAMP7 vesicles to the cell surface; the function seems to implicate kinesin heavy chain isoform 5 proteins, GOLGA4, RAB21 and MACF1. Required for the colocalization of VAMP7 and Rab21, probably on TGN sites. Involved in GLUT1 endosome-to-plasma membrane trafficking; the function is dependent of association with VPS29. Regulates the proper trafficking of melanogenic enzymes TYR, TYRP1 and DCT/TYRP2 to melanosomes in melanocytes. The polypeptide is Ankyrin repeat domain-containing protein 27 (ANKRD27) (Homo sapiens (Human)).